A 512-amino-acid polypeptide reads, in one-letter code: Kelch repeat protein C2 (512 aa).

One can recognise a BTB domain in the interval 2–67 (ESVIFSINGE…MRWKKINITV (66 aa)). Residues 102–176 (CIRMFNFSKR…LLKWIHKNPN (75 aa)) form the BACK domain. Kelch repeat units lie at residues 216 to 261 (IKHN…LYNC), 262 to 307 (LYII…VNDG), 309 to 354 (LYVI…FVND), 356 to 403 (IYVM…EYDG), 405 to 449 (IYAI…SCGD), and 452 to 498 (LIIA…THKS).

The protein belongs to the poxviruses Kelch family.

The protein is Kelch repeat protein C2 of Camelus.